A 460-amino-acid polypeptide reads, in one-letter code: G-protein coupled receptor 22 (460 aa).

At 1–74 (MESMPSSLTH…YPVSFQVSLT (74 aa)) the chain is on the cytoplasmic side. A helical transmembrane segment spans residues 75-95 (GFLMLEIVLGLSSNLTVLALY). Topologically, residues 96–114 (CMKSNLVSSVSNIVTMNLH) are extracellular. A helical transmembrane segment spans residues 115 to 135 (VLDVLVCVGCIPLTIVVVLLP). Residues 136–144 (LEGNNALIC) lie on the Cytoplasmic side of the membrane. The chain crosses the membrane as a helical span at residues 145-165 (CFHEACVSFASVATAANVLAI). The Extracellular portion of the chain corresponds to 166-185 (TLDRYDISVRPANRVLTMGR). Residues 186-206 (AVALLGSIWALSFFSFLVPFI) form a helical membrane-spanning segment. Over 207–235 (EEGFFSQAGNERNQTEAEEPSNEYYTELG) the chain is Cytoplasmic. Residues 236 to 256 (LYYHLLAQIPIFFFTAVVMLV) form a helical membrane-spanning segment. At 257 to 343 (TYYKILQALN…ERQKRVFRMS (87 aa)) the chain is on the extracellular side. Basic residues predominate over residues 276-286 (VPKKKPRKKKT). Positions 276–309 (VPKKKPRKKKTISMTSTQPESTDASQSSAGRNAP) are disordered. The segment covering 287–305 (ISMTSTQPESTDASQSSAG) has biased composition (polar residues). The helical transmembrane segment at 344–364 (LLIISTFLLCWTPITVLNTVI) threads the bilayer. Over 365 to 377 (LSVGPSNFTVRLR) the chain is Cytoplasmic. Residues 378–398 (LGFLVMAYGTTIFHPLLYAFT) traverse the membrane as a helical segment. Residues 399–460 (RQKFQKVLKS…QKCLSSEDVE (62 aa)) lie on the Extracellular side of the membrane.

Belongs to the G-protein coupled receptor 1 family.

It is found in the cell membrane. Orphan G-protein coupled receptor that regulates cilia length and structure in the Kupffer's vesicle leading to the left-right asymmetry development by establishing a directional fluid flow. The polypeptide is G-protein coupled receptor 22 (gpr22a) (Danio rerio (Zebrafish)).